We begin with the raw amino-acid sequence, 558 residues long: Ribonuclease Y (558 aa).

Residues 3–23 (VLSILLILVAVGVGIFVGRQF) form a helical membrane-spanning segment. A KH domain is found at 248–311 (TTTTVELPSN…EIAKEALQRL (64 aa)). In terms of domain architecture, HD spans 374 to 467 (VLLHSKEVAY…VCAADALSAA (94 aa)).

Belongs to the RNase Y family.

The protein localises to the cell membrane. In terms of biological role, endoribonuclease that initiates mRNA decay. This chain is Ribonuclease Y, found in Aquifex aeolicus (strain VF5).